We begin with the raw amino-acid sequence, 226 residues long: Ornithine decarboxylase antizyme (226 aa).

Belongs to the ODC antizyme family. In terms of assembly, interacts with ODC and thereby sterically blocks ODC homodimerization.

Its function is as follows. Ornithine decarboxylase (ODC) antizyme protein that negatively regulates ODC activity and intracellular polyamine biosynthesis in response to increased intracellular polyamine levels. Binds to ODC monomers, inhibiting the assembly of the functional ODC homodimer, and targets the monomers for ubiquitin-independent proteolytic destruction by the 26S proteasome. This Schizosaccharomyces pombe (strain 972 / ATCC 24843) (Fission yeast) protein is Ornithine decarboxylase antizyme (spa1).